The primary structure comprises 297 residues: Ribosomal RNA small subunit methyltransferase H (297 aa).

Residues 34 to 36 (GGH), Asp-54, Phe-81, Asp-99, and Gln-106 contribute to the S-adenosyl-L-methionine site.

The protein belongs to the methyltransferase superfamily. RsmH family.

Its subcellular location is the cytoplasm. The enzyme catalyses cytidine(1402) in 16S rRNA + S-adenosyl-L-methionine = N(4)-methylcytidine(1402) in 16S rRNA + S-adenosyl-L-homocysteine + H(+). Specifically methylates the N4 position of cytidine in position 1402 (C1402) of 16S rRNA. This chain is Ribosomal RNA small subunit methyltransferase H, found in Chlamydia pneumoniae (Chlamydophila pneumoniae).